The following is a 57-amino-acid chain: Large ribosomal subunit protein bL32 (57 aa).

Over residues 1–19 (MAVPKRRKSRSNTRSRRSQ) the composition is skewed to basic residues. The segment at 1–22 (MAVPKRRKSRSNTRSRRSQWKA) is disordered.

It belongs to the bacterial ribosomal protein bL32 family.

This Mycobacterium tuberculosis (strain ATCC 25177 / H37Ra) protein is Large ribosomal subunit protein bL32.